We begin with the raw amino-acid sequence, 347 residues long: Probable tRNA N6-adenosine threonylcarbamoyltransferase (347 aa).

Positions 109, 113, and 130 each coordinate a divalent metal cation. Substrate contacts are provided by residues 130–134 (YVSGG), D162, G177, E181, and N277. D305 lines the a divalent metal cation pocket.

The protein belongs to the KAE1 / TsaD family. In terms of assembly, component of the EKC/KEOPS complex; the whole complex dimerizes. Requires a divalent metal cation as cofactor.

It is found in the cytoplasm. Its subcellular location is the nucleus. The enzyme catalyses L-threonylcarbamoyladenylate + adenosine(37) in tRNA = N(6)-L-threonylcarbamoyladenosine(37) in tRNA + AMP + H(+). In terms of biological role, component of the EKC/KEOPS complex that is required for the formation of a threonylcarbamoyl group on adenosine at position 37 (t(6)A37) in tRNAs that read codons beginning with adenine. The complex is probably involved in the transfer of the threonylcarbamoyl moiety of threonylcarbamoyl-AMP (TC-AMP) to the N6 group of A37. Likely plays a direct catalytic role in this reaction, but requires other protein(s) of the complex to fulfill this activity. This chain is Probable tRNA N6-adenosine threonylcarbamoyltransferase, found in Drosophila melanogaster (Fruit fly).